The primary structure comprises 428 residues: Glutamyl-tRNA reductase (428 aa).

Substrate contacts are provided by residues 55–58 (TCNR), Ser-114, 119–121 (ETQ), and Gln-125. Cys-56 serves as the catalytic Nucleophile. 194–199 (GAGEMI) lines the NADP(+) pocket.

This sequence belongs to the glutamyl-tRNA reductase family. In terms of assembly, homodimer.

It carries out the reaction (S)-4-amino-5-oxopentanoate + tRNA(Glu) + NADP(+) = L-glutamyl-tRNA(Glu) + NADPH + H(+). The protein operates within porphyrin-containing compound metabolism; protoporphyrin-IX biosynthesis; 5-aminolevulinate from L-glutamyl-tRNA(Glu): step 1/2. In terms of biological role, catalyzes the NADPH-dependent reduction of glutamyl-tRNA(Glu) to glutamate 1-semialdehyde (GSA). The protein is Glutamyl-tRNA reductase of Paraburkholderia phytofirmans (strain DSM 17436 / LMG 22146 / PsJN) (Burkholderia phytofirmans).